The chain runs to 567 residues: Wee1-like protein kinase 2 (567 aa).

2 stretches are compositionally biased toward basic and acidic residues: residues 1–12 (MDDSSINKELKQ) and 26–36 (EGQKEAPESRE). 2 disordered regions span residues 1–103 (MDDS…DSRS) and 170–191 (RSNG…EGKV). Ser77 bears the Phosphoserine mark. Residues 174 to 176 (KRK) carry the Nuclear localization signal motif. The region spanning 215–494 (FLEVEKIGVG…ARSRVLRPSL (280 aa)) is the Protein kinase domain. Residues 221–229 (IGVGEFGTV) and Lys244 contribute to the ATP site. A Nuclear export signal motif is present at residues 318–332 (KLKDILLQISLGLKY). Catalysis depends on Asp342, which acts as the Proton acceptor. Asn347 and Asp384 together coordinate Mg(2+). The stretch at 497 to 523 (AEELQQQLNLEKSKTATLERELREAQQ) forms a coiled coil. The tract at residues 502-567 (QQLNLEKSKT…SSFTCGKSSP (66 aa)) is disordered. The span at 507–520 (EKSKTATLERELRE) shows a compositional bias: basic and acidic residues. Residues 555 to 567 (AKSSSFTCGKSSP) show a composition bias toward polar residues.

Belongs to the protein kinase superfamily. Ser/Thr protein kinase family. WEE1 subfamily. In terms of processing, phosphorylation leads to increase its activity.

The protein localises to the nucleus. The enzyme catalyses L-tyrosyl-[protein] + ATP = O-phospho-L-tyrosyl-[protein] + ADP + H(+). Functionally, oocyte-specific protein tyrosine kinase that phosphorylates and inhibits CDK1 and acts as a key regulator of meiosis during both prophase I and metaphase II. Required to maintain meiotic arrest in oocytes during the germinal vesicle (GV) stage, a long period of quiescence at dictyate prophase I, by phosphorylating CDK1 at 'Tyr-15', leading to inhibit CDK1 activity and prevent meiotic reentry. Also required for metaphase II exit during egg activation by phosphorylating CDK1 at 'Tyr-15', to ensure exit from meiosis in oocytes and promote pronuclear formation. In Canis lupus familiaris (Dog), this protein is Wee1-like protein kinase 2 (WEE2).